The sequence spans 310 residues: Solute carrier family 25 member 47 (310 aa).

Solcar repeat units follow at residues 1 to 80 (MDFV…CLAH), 93 to 208 (PTKA…LCEW), and 217 to 304 (PDVL…VLRL). A run of 6 helical transmembrane segments spans residues 3-23 (FVAG…LDTV), 55-75 (GLSL…GTYH), 98-114 (ITLS…FLTS), 194-210 (SFAT…EWLT), 219-239 (VLGV…VATP), and 280-298 (LALN…FVAY).

It belongs to the mitochondrial carrier (TC 2.A.29) family. As to expression, specifically expressed in liver (at protein level).

It is found in the mitochondrion inner membrane. The protein localises to the mitochondrion outer membrane. It catalyses the reaction NAD(+)(in) = NAD(+)(out). It carries out the reaction acetyl-CoA(in) = acetyl-CoA(out). Its function is as follows. Mitochondrial NAD(+) transporter that acts as a 'metabolic gate' in hepatic lipogenesis. Provides NAD(+) substrate to mitochondrial SIRT3 deacetylase and enables its NAD(+)-dependent activities in mitochondrial energy metabolism. This triggers downstream activation of PRKAA1/AMPK-alpha signaling cascade that negatively regulates sterol regulatory element-binding protein (SREBP) transcriptional activities and ATP-consuming lipogenesis to restore cellular energy balance. May transport other mitochondrial metabolites having an aromatic nucleotide and phosphate groups, such as acetyl-CoA. Does not transport amino acids. The transport mechanism remains to be elucidated. This Mus musculus (Mouse) protein is Solute carrier family 25 member 47.